A 354-amino-acid chain; its full sequence is Transcription termination factor 3, mitochondrial (354 aa).

The N-terminal 89 residues, 1-89 (MFCSALRNIL…SFNLAAYVNN (89 aa)), are a transit peptide targeting the mitochondrion.

The protein belongs to the mTERF family.

The protein localises to the mitochondrion. In terms of biological role, binds promoter DNA and regulates initiation of transcription. Regulator of mitochondrial ribosome biogenesis and translation that is essential for development. Required for normal mitochondrial transcription and translation. Required for assembly of mitochondrial respiratory complexes and normal mitochondrial function. Maintains 16S rRNA levels and functions in mitochondrial ribosome assembly by regulating the biogenesis of the 39S ribosomal subunit. The protein is Transcription termination factor 3, mitochondrial of Drosophila melanogaster (Fruit fly).